The primary structure comprises 192 residues: MSDGETAVIQSLAPGPIDGVSYPLKMVYCGQCSMPPEYCDYSGQTDVCRAWATQNAPELLEGLEISDEPAADGDEKKKQKRGGKGSKTGAAAAQAAASGGKKKGGGPQKVTLQREPRGKKSVTVIKGLATFDIDLKVASKLFAQKFACGSSVTGADEIVIQGDVKDDLLDLIPEKWKQVTDEQIDDLGDKKR.

The interval 62-116 is disordered; sequence GLEISDEPAADGDEKKKQKRGGKGSKTGAAAAQAAASGGKKKGGGPQKVTLQREP. The span at 87–99 shows a compositional bias: low complexity; that stretch reads KTGAAAAQAAASG. In terms of domain architecture, SUI1 spans 117–176; sequence RGKKSVTVIKGLATFDIDLKVASKLFAQKFACGSSVTGADEIVIQGDVKDDLLDLIPEKW.

It belongs to the DENR family.

In Caenorhabditis elegans, this protein is Density-regulated protein homolog.